Consider the following 620-residue polypeptide: Estrogen receptor (620 aa).

Composition is skewed to polar residues over residues 1-10 (MSKRQSSVQI) and 101-111 (GSLQSLGSGPT). Disordered regions lie at residues 1–55 (MSKR…RGSG) and 88–111 (YSAP…SGPT). The segment at 1–185 (MSKRQSSVQI…GFEMAKDTRF (185 aa)) is modulating. 2 NR C4-type zinc fingers span residues 186-206 (CAVC…CEGC) and 222-246 (CPAT…LRKC). The nuclear receptor DNA-binding region spans 186–251 (CAVCSDYASG…RLRKCYEVGM (66 aa)). The tract at residues 252 to 314 (MKGGVRKDRI…GGGRLSVTSI (63 aa)) is hinge. The interval 286–308 (KTVHYDGRKRSSTGGGGGGGGGR) is disordered. The segment covering 298 to 308 (TGGGGGGGGGR) has biased composition (gly residues). In terms of domain architecture, NR LBD spans 315–551 (PPEQVLLLLQ…DLLLEMLDAH (237 aa)). Residues 558–620 (RAPQSLSQVD…RPDCTPALQD (63 aa)) are disordered.

Belongs to the nuclear hormone receptor family. NR3 subfamily. In terms of assembly, binds DNA as a homodimer. Can form a heterodimer with ER-beta. As to expression, widely expressed in brain, ovary, testis, and female liver.

The protein resides in the nucleus. Its function is as follows. The steroid hormones and their receptors are involved in the regulation of eukaryotic gene expression and affect cellular proliferation and differentiation in target tissues. In Oryzias latipes (Japanese rice fish), this protein is Estrogen receptor (esr1).